A 197-amino-acid chain; its full sequence is Probable GTP-binding protein EngB (197 aa).

The EngB-type G domain occupies 22–197; sequence TGVEVAFAGR…FKEKLDTWYQ (176 aa). Residues 30–37, 57–61, 75–78, 142–145, and 177–179 contribute to the GTP site; these read GRSNAGKS, GRTQL, DLPG, TKAD, and FSS. Mg(2+) contacts are provided by Ser37 and Thr59.

The protein belongs to the TRAFAC class TrmE-Era-EngA-EngB-Septin-like GTPase superfamily. EngB GTPase family. It depends on Mg(2+) as a cofactor.

Necessary for normal cell division and for the maintenance of normal septation. This Francisella tularensis subsp. holarctica (strain FTNF002-00 / FTA) protein is Probable GTP-binding protein EngB.